The primary structure comprises 205 residues: MCKGLAGLPASCLRSAKDMKHRLGFLLQKSDSCEHSSSHSKKDKVVTCQRVSQEEVKKWAESLENLINHECGLAAFKAFLKSEYSEENIDFWISCEEYKKIKSPSKLSPKAKKIYNEFISVQATKEVNLDSCTREETSRNMLEPTITCFDEAQKKIFNLMEKDSYRRFLKSRFYLDLTNPSSCGAEKQKGAKSSADCTSLVPQCA.

Residues C2, C12, and C95 are each lipidated (S-palmitoyl cysteine). The RGS domain maps to 62 to 178 (SLENLINHEC…LKSRFYLDLT (117 aa)).

Either Cys-2 or Cys-12 or both are palmitoylated. Post-translationally, phosphorylated by cyclic GMP-dependent protein kinase.

Inhibits signal transduction by increasing the GTPase activity of G protein alpha subunits thereby driving them into their inactive GDP-bound form. Activity on G(z)-alpha is inhibited by phosphorylation of the G-protein. Activity on G(z)-alpha and G(i)-alpha-1 is inhibited by palmitoylation of the G-protein. The protein is Regulator of G-protein signaling 4 (Rgs4) of Rattus norvegicus (Rat).